The primary structure comprises 102 residues: Protein translation factor SUI1 homolog (102 aa).

Belongs to the SUI1 family.

The sequence is that of Protein translation factor SUI1 homolog from Methanococcus vannielii.